The sequence spans 423 residues: Glutamate-1-semialdehyde 2,1-aminomutase (423 aa).

Position 266 is an N6-(pyridoxal phosphate)lysine (K266).

This sequence belongs to the class-III pyridoxal-phosphate-dependent aminotransferase family. HemL subfamily. As to quaternary structure, homodimer. Requires pyridoxal 5'-phosphate as cofactor.

It is found in the cytoplasm. It carries out the reaction (S)-4-amino-5-oxopentanoate = 5-aminolevulinate. Its pathway is porphyrin-containing compound metabolism; protoporphyrin-IX biosynthesis; 5-aminolevulinate from L-glutamyl-tRNA(Glu): step 2/2. In Nitratidesulfovibrio vulgaris (strain ATCC 29579 / DSM 644 / CCUG 34227 / NCIMB 8303 / VKM B-1760 / Hildenborough) (Desulfovibrio vulgaris), this protein is Glutamate-1-semialdehyde 2,1-aminomutase.